The following is a 200-amino-acid chain: Peptidyl-tRNA hydrolase (200 aa).

Tyrosine 15 is a binding site for tRNA. The Proton acceptor role is filled by histidine 20. TRNA contacts are provided by phenylalanine 66, asparagine 68, and asparagine 114.

It belongs to the PTH family. Monomer.

It is found in the cytoplasm. The enzyme catalyses an N-acyl-L-alpha-aminoacyl-tRNA + H2O = an N-acyl-L-amino acid + a tRNA + H(+). Functionally, hydrolyzes ribosome-free peptidyl-tRNAs (with 1 or more amino acids incorporated), which drop off the ribosome during protein synthesis, or as a result of ribosome stalling. Catalyzes the release of premature peptidyl moieties from peptidyl-tRNA molecules trapped in stalled 50S ribosomal subunits, and thus maintains levels of free tRNAs and 50S ribosomes. The polypeptide is Peptidyl-tRNA hydrolase (Ralstonia nicotianae (strain ATCC BAA-1114 / GMI1000) (Ralstonia solanacearum)).